A 904-amino-acid polypeptide reads, in one-letter code: Pantothenate kinase 2 (904 aa).

Positions 1-56 (MAANNNSDPILDEGGGGGVKHEAVGEAGEGKGGGGGAAATQAPAAMLPRSGSRPQL) are disordered. The pantothenate kinase stretch occupies residues 1–472 (MAANNNSDPI…LGDLNEKISW (472 aa)). The interval 473–904 (MEKFVQKGTQ…DCICKFEPVP (432 aa)) is 4'-phosphopantetheine phosphatase. The Mn(2+) site is built by aspartate 735, asparagine 736, and aspartate 771. The Subfamily II EGMGR motif motif lies at 855 to 859 (EGMGR).

The protein in the N-terminal section; belongs to the type II pantothenate kinase family. In the C-terminal section; belongs to the damage-control phosphatase family. Phosphopantetheine phosphatase II subfamily. Requires Mn(2+) as cofactor. Ni(2+) serves as cofactor.

It carries out the reaction (R)-pantothenate + ATP = (R)-4'-phosphopantothenate + ADP + H(+). The catalysed reaction is (R)-4'-phosphopantothenate + H2O = (R)-pantothenate + phosphate. The enzyme catalyses (R)-4'-phosphopantetheine + H2O = (R)-pantetheine + phosphate. It catalyses the reaction (R)-4'-phosphopantetheine sulfonate + H2O = (R)-pantetheine sulfonate + phosphate. The protein operates within cofactor biosynthesis; coenzyme A biosynthesis; CoA from (R)-pantothenate: step 1/5. Catalyzes the phosphorylation of pantothenate the first step in CoA biosynthesis. May play a role in the physiological regulation of the intracellular CoA concentration. Functionally redudant with PANK1. The phosphatase activity shows preference for normal or oxidatively damaged intermediates of 4'-phosphopantetheine, which provides strong indirect evidence that the phosphatase activity pre-empts damage in the CoA pathway. Hydrolyzing excess 4'-phosphopantetheine could constitute a directed overflow mechanism to prevent its oxidation to the S-sulfonate, sulfonate, or other forms. Hydrolyzing 4'-phosphopantetheine sulfonate or S-sulfonate would forestall their conversion to inactive forms of CoA and acyl carrier protein. This is Pantothenate kinase 2 from Oryza sativa subsp. japonica (Rice).